The sequence spans 355 residues: Methylthioribose-1-phosphate isomerase (355 aa).

Residues 53-55 (RGA), arginine 96, and glutamine 205 contribute to the substrate site. The active-site Proton donor is the aspartate 246. A substrate-binding site is contributed by 256–257 (NK).

Belongs to the eIF-2B alpha/beta/delta subunits family. MtnA subfamily.

It catalyses the reaction 5-(methylsulfanyl)-alpha-D-ribose 1-phosphate = 5-(methylsulfanyl)-D-ribulose 1-phosphate. The protein operates within amino-acid biosynthesis; L-methionine biosynthesis via salvage pathway; L-methionine from S-methyl-5-thio-alpha-D-ribose 1-phosphate: step 1/6. Functionally, catalyzes the interconversion of methylthioribose-1-phosphate (MTR-1-P) into methylthioribulose-1-phosphate (MTRu-1-P). In Thermosynechococcus vestitus (strain NIES-2133 / IAM M-273 / BP-1), this protein is Methylthioribose-1-phosphate isomerase.